We begin with the raw amino-acid sequence, 296 residues long: Deleted in azoospermia-like (296 aa).

The span at 1–18 shows a compositional bias: polar residues; sequence MSAANPETPNSTISREAN. The disordered stretch occupies residues 1-25; sequence MSAANPETPNSTISREANTQSSSAA. One can recognise an RRM domain in the interval 40-115; the sequence is NTVFVGGIDV…KKLKLGPAIR (76 aa). The homodimerization stretch occupies residues 80-132; sequence KGYGFVSFFNDVDVQKIVESQINFHGKKLKLGPAIRKQNLCAYHVQPRPLVFN. The 24-residue stretch at 167–190 folds into the DAZ domain; that stretch reads AYPPYPNSPVQVITGYQLPVYNYQ. Position 277 is a phosphotyrosine (Y277).

Belongs to the RRM DAZ family. Homodimer and heterodimer. Forms a heterodimer with DAZ. Interacts with BOLL, DAZAP1 and DAZAP2. Interacts with PUM2 Multiple DAZL RRMs can bind to a single RNA containing multiple GUU triplets. In terms of tissue distribution, testis specific.

It is found in the cytoplasm. Its subcellular location is the nucleus. Functionally, RNA-binding protein, which is essential for gametogenesis in both males and females. Plays a central role during spermatogenesis. Acts by binding to the 3'-UTR of mRNA, specifically recognizing GUU triplets, and thereby regulating the translation of key transcripts. This Callithrix jacchus (White-tufted-ear marmoset) protein is Deleted in azoospermia-like (DAZL).